The primary structure comprises 195 residues: Glycerol-3-phosphate acyltransferase (195 aa).

4 helical membrane passes run 2–22 (INLLVIISAYFIGNFSTSFIV), 79–99 (AALMAGIAVVIGHNWPVLLGF), 111–131 (VALIASPLAAIASISLGVVIL), and 146–166 (TILPFFLFSYGLEYFIFGLVL).

The protein belongs to the PlsY family. As to quaternary structure, probably interacts with PlsX.

Its subcellular location is the cell membrane. The catalysed reaction is an acyl phosphate + sn-glycerol 3-phosphate = a 1-acyl-sn-glycero-3-phosphate + phosphate. It functions in the pathway lipid metabolism; phospholipid metabolism. Catalyzes the transfer of an acyl group from acyl-phosphate (acyl-PO(4)) to glycerol-3-phosphate (G3P) to form lysophosphatidic acid (LPA). This enzyme utilizes acyl-phosphate as fatty acyl donor, but not acyl-CoA or acyl-ACP. This Alkaliphilus metalliredigens (strain QYMF) protein is Glycerol-3-phosphate acyltransferase.